A 272-amino-acid chain; its full sequence is Potassium channel regulatory protein (272 aa).

Positions 5–106 (ELVTLNVGGK…LLNPYLLQPR (102 aa)) constitute a BTB domain.

In terms of assembly, can form homooligomers. Interacts with KCNA1 (via cytoplasmic N-terminal domain) and KCNA4. As to expression, ubiquitous in normal tissues and expressed in some tumor tissues.

It localises to the endoplasmic reticulum. Its function is as follows. Inhibits potassium fluxes in cells. May regulate Kv1 family channel proteins by retaining a fraction of channels in endomembranes. The sequence is that of Potassium channel regulatory protein (KCNRG) from Homo sapiens (Human).